Reading from the N-terminus, the 3388-residue chain is Genome polyprotein (3388 aa).

An interaction with host EXOC1 region spans residues 1 to 15; sequence MNDQRKKARNTPFNM. Residues 1–101 are Cytoplasmic-facing; the sequence is MNDQRKKARN…LNILNRRRRT (101 aa). The segment at 37–72 is hydrophobic; homodimerization of capsid protein C; that stretch reads MLQGRGPLKLFMALVAFLRFLTIPPTAGILKRWGTI. The propeptide at 101–114 is ER anchor for the capsid protein C, removed in mature form by serine protease NS3; sequence TAGMIIMLIPTVMA. The helical transmembrane segment at 102–122 threads the bilayer; the sequence is AGMIIMLIPTVMAFHLTTRNG. The Extracellular portion of the chain corresponds to 123 to 238; that stretch reads EPHMIVSRQE…GAWKHAQRIE (116 aa). N183 carries N-linked (GlcNAc...) asparagine; by host glycosylation. Residues 239–259 form a helical membrane-spanning segment; the sequence is TWILRHPGFTIMAAILAYTIG. At 260 to 265 the chain is on the cytoplasmic side; it reads TTHFQR. A helical transmembrane segment spans residues 266-280; the sequence is VLIFILLTAIAPSMT. Residues 281 to 725 are Extracellular-facing; sequence MRCIGISNRD…LHQVFGAIYG (445 aa). 4 cysteine pairs are disulfide-bonded: C283–C310, C340–C401, C354–C385, and C372–C396. A glycan (N-linked (GlcNAc...) asparagine; by host) is linked at N347. Residues 378–391 are fusion peptide; the sequence is DRGWGNGCGLFGKG. N-linked (GlcNAc...) asparagine; by host glycosylation occurs at N433. Disulfide bonds link C465–C565 and C582–C613. The helical transmembrane segment at 726–746 threads the bilayer; the sequence is AAFSGVSWTMKILIGVIITWI. The Cytoplasmic segment spans residues 747–752; the sequence is GMNSRS. A helical transmembrane segment spans residues 753-773; that stretch reads TSLSVSLVLVGIVTLYLGVMV. The Extracellular segment spans residues 774-1195; sequence QADSGCVVSW…MVGATMTDDI (422 aa). 6 disulfides stabilise this stretch: C779–C790, C830–C918, C954–C998, C1055–C1104, C1066–C1088, and C1087–C1091. N905 and N982 each carry an N-linked (GlcNAc...) asparagine; by host glycan. N1134 carries N-linked (GlcNAc...) asparagine; by host glycosylation. A helical transmembrane segment spans residues 1196-1220; sequence GMGVTYLALLAAFKVRPTFAAGLLL. The Cytoplasmic portion of the chain corresponds to 1221–1226; that stretch reads RKLTSK. A helical transmembrane segment spans residues 1227-1245; that stretch reads ELMMTTIGIVLLSQSSIPE. Residues 1246-1269 lie on the Lumenal side of the membrane; it reads TILELTDALALGMMVLKMVRNMEK. A helical transmembrane segment spans residues 1270–1290; the sequence is YQLAVTIMAILCVPNAVILQN. A topological domain (cytoplasmic) is located at residue A1291. The helical transmembrane segment at 1292-1310 threads the bilayer; it reads WKVSCTILAVVSVSPLFLT. The Lumenal segment spans residues 1311-1317; it reads SSQQKAD. A helical membrane pass occupies residues 1318-1338; it reads WIPLALTIKGLNPTAIFLTTL. At 1339–1346 the chain is on the cytoplasmic side; it reads SRTSKKRS. The chain crosses the membrane as a helical span at residues 1347-1367; that stretch reads WPLNEAIMAVGMVSILASSLL. Topologically, residues 1368–1370 are lumenal; sequence KND. The helical transmembrane segment at 1371–1391 threads the bilayer; it reads TPMTGPLVAGGLLTVCYVLTG. The Cytoplasmic segment spans residues 1392-1447; it reads RSADLELERATDVKWDDQAEISGSSPILSITISEDGSMSIKNEEEEQTLTILIRTG. The interval 1398-1437 is interacts with and activates NS3 protease; the sequence is LERATDVKWDDQAEISGSSPILSITISEDGSMSIKNEEEE. The helical intramembrane region spans 1448–1468; it reads LLVISGLFPVSIPITAAAWYL. Residues 1469-2144 lie on the Cytoplasmic side of the membrane; it reads WEVKKQRAGV…LSELPETLET (676 aa). A Peptidase S7 domain is found at 1476-1653; that stretch reads AGVLWDVPSP…EKSIEDNPEI (178 aa). Residues H1526, D1550, and S1610 each act as charge relay system; for serine protease NS3 activity in the active site. In terms of domain architecture, Helicase ATP-binding spans 1655 to 1811; it reads DDIFRKRRLT…QSNAPIMDEE (157 aa). The interval 1659 to 1662 is important for RNA-binding; it reads RKRR. 1668–1675 is a binding site for ATP; sequence LHPGAGKT. The DEAH box motif lies at 1759-1762; it reads DEAH. The Helicase C-terminal domain occupies 1821-1988; it reads SGHEWVTDFK…IIPSMFEPER (168 aa). K1863 carries the post-translational modification N6-acetyllysine; by host. Residues 2145–2165 form a helical membrane-spanning segment; it reads LLLLTLLATVTGGIFLFLMSG. The Lumenal portion of the chain corresponds to 2166–2167; the sequence is RG. An intramembrane region (helical) is located at residues 2168-2188; that stretch reads IGKMTLGMCCIITASILLWYA. Q2189 is a topological domain (lumenal). A helical transmembrane segment spans residues 2190–2210; sequence IQPHWIAASIILEFFLIVLLI. Topologically, residues 2211 to 2225 are cytoplasmic; it reads PEPEKQRTPQDNQLT. The helical transmembrane segment at 2226–2246 threads the bilayer; it reads YVIIAILTVVAATMANEMGFL. The Lumenal portion of the chain corresponds to 2247–2271; the sequence is EKTKKDLGLGNIATQQPESNILDID. Positions 2272–2292 form an intramembrane region, helical; it reads LRPASAWTLYAVATTFITPML. Topologically, residues 2293–2313 are lumenal; it reads RHSIENSSVNVSLTAIANQAT. N-linked (GlcNAc...) asparagine; by host glycosylation is found at N2298 and N2302. An intramembrane region (helical) is located at residues 2314-2334; the sequence is VLMGLGKGWPLSKMDIGVPLL. Over 2335–2344 the chain is Lumenal; sequence AIGCYSQVNP. The helical transmembrane segment at 2345–2365 threads the bilayer; it reads ITLTAALLLLVAHYAIIGPGL. The Cytoplasmic portion of the chain corresponds to 2366 to 2410; sequence QAKATREAQKRAAAGIMKNPTVDGITVIDLDPIPYDPKFEKQLGQ. Residues 2411-2431 traverse the membrane as a helical segment; sequence VMLLVLCVTQVLMMRTTWALC. The Lumenal segment spans residues 2432–2456; it reads EALTLATGPVSTLWEGNPGRFWNTT. An N-linked (GlcNAc...) asparagine; by host glycan is attached at N2454. The chain crosses the membrane as a helical span at residues 2457-2477; sequence IAVSMANIFRGSYLAGAGLLF. At 2478–3388 the chain is on the cytoplasmic side; that stretch reads SIMKNTTSTR…REEEEAGVLW (911 aa). The mRNA cap 0-1 NS5-type MT domain occupies 2490 to 2752; that stretch reads TGNIGETLGE…DVDLGSGTRN (263 aa). S2544 lines the S-adenosyl-L-methionine pocket. S2544 is modified (phosphoserine). K2549 functions as the For 2'-O-MTase activity in the catalytic mechanism. Residues 2565–2568 carry the SUMO-interacting motif motif; it reads VVDL. Positions 2574, 2575, 2592, 2593, 2619, and 2620 each coordinate S-adenosyl-L-methionine. D2634 functions as the For 2'-O-MTase activity in the catalytic mechanism. Position 2635 (I2635) interacts with S-adenosyl-L-methionine. Residues K2669 and E2705 each act as for 2'-O-MTase activity in the active site. Residue Y2707 participates in S-adenosyl-L-methionine binding. Positions 2926, 2930, 2935, and 2938 each coordinate Zn(2+). Residues 3017–3166 form the RdRp catalytic domain; sequence AMYADDTAGW…PLDDRFARAL (150 aa). Zn(2+) contacts are provided by H3200, C3216, and C3335.

In the N-terminal section; belongs to the class I-like SAM-binding methyltransferase superfamily. mRNA cap 0-1 NS5-type methyltransferase family. Homodimer. Interacts (via N-terminus) with host EXOC1 (via C-terminus); this interaction results in EXOC1 degradation through the proteasome degradation pathway. In terms of assembly, forms heterodimers with envelope protein E in the endoplasmic reticulum and Golgi. As to quaternary structure, homodimer; in the endoplasmic reticulum and Golgi. Interacts with protein prM. Interacts with non-structural protein 1. Homodimer; Homohexamer when secreted. Interacts with envelope protein E. Interacts with host PRKAA1. In terms of assembly, interacts (via N-terminus) with serine protease NS3. As to quaternary structure, forms a heterodimer with serine protease NS3. May form homooligomers. Forms a heterodimer with NS2B. Interacts with NS4B. Interacts with unphosphorylated RNA-directed RNA polymerase NS5; this interaction stimulates RNA-directed RNA polymerase NS5 guanylyltransferase activity. Interacts with host SHFL. In terms of assembly, interacts with host MAVS; this interaction inhibits the synthesis of IFN-beta. Interacts with host SHFL. Interacts with host AUP1; the interaction occurs in the presence of Dengue virus NS4B and induces lipophagy which facilitates production of virus progeny particles. May interact with host SRPRA and SEC61G. As to quaternary structure, interacts with serine protease NS3. Homodimer. Interacts with host STAT2; this interaction inhibits the phosphorylation of the latter, and, when all viral proteins are present (polyprotein), targets STAT2 for degradation. Interacts with serine protease NS3. Interacts with host PAF1 complex; the interaction may prevent the recruitment of the PAF1 complex to interferon-responsive genes, and thus reduces the immune response. In terms of processing, specific enzymatic cleavages in vivo yield mature proteins. Cleavages in the lumen of endoplasmic reticulum are performed by host signal peptidase, whereas cleavages in the cytoplasmic side are performed by serine protease NS3. Signal cleavage at the 2K-4B site requires a prior NS3 protease-mediated cleavage at the 4A-2K site. Post-translationally, cleaved in post-Golgi vesicles by a host furin, releasing the mature small envelope protein M, and peptide pr. This cleavage is incomplete as up to 30% of viral particles still carry uncleaved prM. N-glycosylated. In terms of processing, N-glycosylated. The excreted form is glycosylated and this is required for efficient secretion of the protein from infected cells. Post-translationally, acetylated by host KAT5. Acetylation modulates NS3 RNA-binding and unwinding activities and plays an important positive role for viral replication. Sumoylation of RNA-directed RNA polymerase NS5 increases NS5 protein stability allowing proper viral RNA replication. In terms of processing, phosphorylated on serines residues. This phosphorylation may trigger NS5 nuclear localization.

It localises to the virion. The protein resides in the host nucleus. The protein localises to the host cytoplasm. Its subcellular location is the host perinuclear region. It is found in the secreted. It localises to the virion membrane. The protein resides in the host endoplasmic reticulum membrane. The protein localises to the host mitochondrion. The enzyme catalyses Selective hydrolysis of -Xaa-Xaa-|-Yaa- bonds in which each of the Xaa can be either Arg or Lys and Yaa can be either Ser or Ala.. It carries out the reaction RNA(n) + a ribonucleoside 5'-triphosphate = RNA(n+1) + diphosphate. The catalysed reaction is a ribonucleoside 5'-triphosphate + H2O = a ribonucleoside 5'-diphosphate + phosphate + H(+). It catalyses the reaction ATP + H2O = ADP + phosphate + H(+). The enzyme catalyses a 5'-end (5'-triphosphoguanosine)-ribonucleoside in mRNA + S-adenosyl-L-methionine = a 5'-end (N(7)-methyl 5'-triphosphoguanosine)-ribonucleoside in mRNA + S-adenosyl-L-homocysteine. It carries out the reaction a 5'-end (N(7)-methyl 5'-triphosphoguanosine)-ribonucleoside in mRNA + S-adenosyl-L-methionine = a 5'-end (N(7)-methyl 5'-triphosphoguanosine)-(2'-O-methyl-ribonucleoside) in mRNA + S-adenosyl-L-homocysteine + H(+). Its function is as follows. Plays a role in virus budding by binding to the cell membrane and gathering the viral RNA into a nucleocapsid that forms the core of a mature virus particle. During virus entry, may induce genome penetration into the host cytoplasm after hemifusion induced by the surface proteins. Can migrate to the cell nucleus where it modulates host functions. Overcomes the anti-viral effects of host EXOC1 by sequestering and degrading the latter through the proteasome degradation pathway. Functionally, inhibits RNA silencing by interfering with host Dicer. In terms of biological role, prevents premature fusion activity of envelope proteins in trans-Golgi by binding to envelope protein E at pH6.0. After virion release in extracellular space, gets dissociated from E dimers. Acts as a chaperone for envelope protein E during intracellular virion assembly by masking and inactivating envelope protein E fusion peptide. prM is the only viral peptide matured by host furin in the trans-Golgi network probably to avoid catastrophic activation of the viral fusion activity in acidic Golgi compartment prior to virion release. prM-E cleavage is inefficient, and many virions are only partially matured. These uncleaved prM would play a role in immune evasion. Its function is as follows. May play a role in virus budding. Exerts cytotoxic effects by activating a mitochondrial apoptotic pathway through M ectodomain. May display a viroporin activity. Functionally, binds to host cell surface receptor and mediates fusion between viral and cellular membranes. Envelope protein is synthesized in the endoplasmic reticulum in the form of heterodimer with protein prM. They play a role in virion budding in the ER, and the newly formed immature particle is covered with 60 spikes composed of heterodimer between precursor prM and envelope protein E. The virion is transported to the Golgi apparatus where the low pH causes dissociation of PrM-E heterodimers and formation of E homodimers. prM-E cleavage is inefficient, and many virions are only partially matured. These uncleaved prM would play a role in immune evasion. In terms of biological role, involved in immune evasion, pathogenesis and viral replication. Once cleaved off the polyprotein, is targeted to three destinations: the viral replication cycle, the plasma membrane and the extracellular compartment. Essential for viral replication. Required for formation of the replication complex and recruitment of other non-structural proteins to the ER-derived membrane structures. Excreted as a hexameric lipoparticle that plays a role against host immune response. Antagonizing the complement function. Binds to the host macrophages and dendritic cells. Inhibits signal transduction originating from Toll-like receptor 3 (TLR3). Mediates complement activation, which may contribute to the pathogenesis of the vascular leakage that occurs in severe dengue disease. Activates autophagy through the AMPK/ERK/mTOR signaling pathway. Mechanistically, acts as the assembly platform for STK11-AMPK interactions and promotes STK11-AMPK interactions. In turn, promotes phosphorylation of the AMPK kinase structural domain and activates AMPK, thereby positively regulating the AMPK/ERK/mTOR signaling pathway and inducing autophagy. Disrupts the host endothelial glycocalyx layer of host pulmonary microvascular endothelial cells, inducing degradation of sialic acid and shedding of heparan sulfate proteoglycans. NS1 induces expression of sialidases, heparanase, and activates cathepsin L, which activates heparanase via enzymatic cleavage. These effects are probably linked to the endothelial hyperpermeability observed in severe dengue disease. Its function is as follows. Component of the viral RNA replication complex that functions in virion assembly and antagonizes the host immune response. Functionally, required cofactor for the serine protease function of NS3. May have membrane-destabilizing activity and form viroporins. In terms of biological role, displays three enzymatic activities: serine protease, NTPase and RNA helicase. NS3 serine protease, in association with NS2B, performs its autocleavage and cleaves the polyprotein at dibasic sites in the cytoplasm: C-prM, NS2A-NS2B, NS2B-NS3, NS3-NS4A, NS4A-2K and NS4B-NS5. NS3 RNA helicase binds RNA and unwinds dsRNA in the 3' to 5' direction. Regulates the ATPase activity of the NS3 helicase activity. NS4A allows NS3 helicase to conserve energy during unwinding. Plays a role in the inhibition of the host innate immune response. Interacts with host MAVS and thereby prevents the interaction between RIGI and MAVS. In turn, IFN-beta production is impaired. Interacts with host AUP1 which mediates induction of lipophagy in host cells and facilitates production of virus progeny particles. Its function is as follows. Functions as a signal peptide for NS4B and is required for the interferon antagonism activity of the latter. Functionally, induces the formation of ER-derived membrane vesicles where the viral replication takes place. Inhibits interferon (IFN)-induced host STAT1 phosphorylation and nuclear translocation, thereby preventing the establishment of cellular antiviral state by blocking the IFN-alpha/beta pathway. In terms of biological role, replicates the viral (+) and (-) RNA genome, and performs the capping of genomes in the cytoplasm. NS5 methylates viral RNA cap at guanine N-7 and ribose 2'-O positions. Besides its role in RNA genome replication, also prevents the establishment of cellular antiviral state by blocking the interferon-alpha/beta (IFN-alpha/beta) signaling pathway. Inhibits host TYK2 and STAT2 phosphorylation, thereby preventing activation of JAK-STAT signaling pathway. May reduce immune responses by preventing the recruitment of the host PAF1 complex to interferon-responsive genes. This Aedimorphus (Red guenon) protein is Genome polyprotein.